The primary structure comprises 354 residues: MSLFDTINSGGTQLLGVAWPTVWALVRILVVAVVILLCVAYLILWERKLIGWMHVRLGPNRVGPAGLLQPIADVLKLLLKEVIQPAQASRWIYLIAPIMVVVPAFAVWAVIPFQAGAVLGDINAGLLYAMAISSIGVYGVILAGWASNSKYAFLGAMRAAAQMVSYEISMGFALVVVLMTAGTLNLSGIVASQEHGIFASYGLNFLSWNWLPLLPMFVVYFISGIAETNRHPFDVVEGESEIVAGHMIDYSGMAFALFFLAEYINMIVISALAATLFLGGWSAPFGFLSFVPGIVWLVAKVFLLLSVFIWARATFPRYRYDQIMRLGWKIFIPVCVVWLVVVGFWIMSPLNIWK.

Helical transmembrane passes span 25-45 (LVRILVVAVVILLCVAYLILW), 91-111 (WIYLIAPIMVVVPAFAVWAVI), 126-146 (LLYAMAISSIGVYGVILAGWA), 170-190 (MGFALVVVLMTAGTLNLSGIV), 205-225 (FLSWNWLPLLPMFVVYFISGI), 267-287 (IVISALAATLFLGGWSAPFGF), 290-310 (FVPGIVWLVAKVFLLLSVFIW), and 330-350 (IFIPVCVVWLVVVGFWIMSPL).

It belongs to the complex I subunit 1 family. As to quaternary structure, NDH-1 is composed of 14 different subunits. Subunits NuoA, H, J, K, L, M, N constitute the membrane sector of the complex.

The protein localises to the cell inner membrane. It catalyses the reaction a quinone + NADH + 5 H(+)(in) = a quinol + NAD(+) + 4 H(+)(out). Its function is as follows. NDH-1 shuttles electrons from NADH, via FMN and iron-sulfur (Fe-S) centers, to quinones in the respiratory chain. The immediate electron acceptor for the enzyme in this species is believed to be ubiquinone. Couples the redox reaction to proton translocation (for every two electrons transferred, four hydrogen ions are translocated across the cytoplasmic membrane), and thus conserves the redox energy in a proton gradient. This subunit may bind ubiquinone. The chain is NADH-quinone oxidoreductase subunit H from Paraburkholderia phytofirmans (strain DSM 17436 / LMG 22146 / PsJN) (Burkholderia phytofirmans).